A 716-amino-acid chain; its full sequence is DNA ligase (716 aa).

Residues 49 to 53 (DAEYD), 98 to 99 (SL), and Glu-131 contribute to the NAD(+) site. Catalysis depends on Lys-133, which acts as the N6-AMP-lysine intermediate. The NAD(+) site is built by Arg-154, Glu-191, Lys-308, and Lys-332. Positions 437, 439, 461, and 467 each coordinate Zn(2+). The BRCT domain maps to 638-716 (KRHSPIATKT…EDEWLQLIAE (79 aa)).

The protein belongs to the NAD-dependent DNA ligase family. LigA subfamily. Mg(2+) is required as a cofactor. Mn(2+) serves as cofactor.

It carries out the reaction NAD(+) + (deoxyribonucleotide)n-3'-hydroxyl + 5'-phospho-(deoxyribonucleotide)m = (deoxyribonucleotide)n+m + AMP + beta-nicotinamide D-nucleotide.. Functionally, DNA ligase that catalyzes the formation of phosphodiester linkages between 5'-phosphoryl and 3'-hydroxyl groups in double-stranded DNA using NAD as a coenzyme and as the energy source for the reaction. It is essential for DNA replication and repair of damaged DNA. This Bradyrhizobium sp. (strain BTAi1 / ATCC BAA-1182) protein is DNA ligase.